Here is a 155-residue protein sequence, read N- to C-terminus: Ribosome maturation factor RimP (155 aa).

The protein belongs to the RimP family.

The protein resides in the cytoplasm. Required for maturation of 30S ribosomal subunits. The chain is Ribosome maturation factor RimP from Prochlorococcus marinus (strain AS9601).